Here is a 478-residue protein sequence, read N- to C-terminus: Sulfate adenylyltransferase subunit 1 (478 aa).

The 217-residue stretch at 24 to 240 folds into the tr-type G domain; that stretch reads KSMLRFLTCG…VLEDIDIDAD (217 aa). The segment at 33 to 40 is G1; the sequence is GSVDDGKS. GTP is bound at residue 33-40; it reads GSVDDGKS. The segment at 91-95 is G2; it reads GITID. The G3 stretch occupies residues 112–115; it reads DTPG. Residues 112–116 and 167–170 contribute to the GTP site; these read DTPGH and NKMD. Positions 167–170 are G4; that stretch reads NKMD. Residues 206-208 form a G5 region; it reads SAL.

It belongs to the TRAFAC class translation factor GTPase superfamily. Classic translation factor GTPase family. CysN/NodQ subfamily. As to quaternary structure, heterodimer composed of CysD, the smaller subunit, and CysN.

It catalyses the reaction sulfate + ATP + H(+) = adenosine 5'-phosphosulfate + diphosphate. It functions in the pathway sulfur metabolism; hydrogen sulfide biosynthesis; sulfite from sulfate: step 1/3. In terms of biological role, with CysD forms the ATP sulfurylase (ATPS) that catalyzes the adenylation of sulfate producing adenosine 5'-phosphosulfate (APS) and diphosphate, the first enzymatic step in sulfur assimilation pathway. APS synthesis involves the formation of a high-energy phosphoric-sulfuric acid anhydride bond driven by GTP hydrolysis by CysN coupled to ATP hydrolysis by CysD. This chain is Sulfate adenylyltransferase subunit 1, found in Aliivibrio salmonicida (strain LFI1238) (Vibrio salmonicida (strain LFI1238)).